The chain runs to 306 residues: tRNA pseudouridine synthase B (306 aa).

Residue D48 is the Nucleophile of the active site.

The protein belongs to the pseudouridine synthase TruB family. Type 1 subfamily.

It carries out the reaction uridine(55) in tRNA = pseudouridine(55) in tRNA. In terms of biological role, responsible for synthesis of pseudouridine from uracil-55 in the psi GC loop of transfer RNAs. In Haemophilus influenzae (strain 86-028NP), this protein is tRNA pseudouridine synthase B.